Consider the following 339-residue polypeptide: Small ribosomal subunit biogenesis GTPase RsgA (339 aa).

The CP-type G domain occupies 111–271 (MRGLLKPVAA…LIDSPGIREF (161 aa)). GTP is bound by residues 159–162 (NKAD) and 213–221 (GQSGVGKSS). Zn(2+) contacts are provided by Cys295, Cys300, His302, and Cys308.

Belongs to the TRAFAC class YlqF/YawG GTPase family. RsgA subfamily. In terms of assembly, monomer. Associates with 30S ribosomal subunit, binds 16S rRNA. It depends on Zn(2+) as a cofactor.

It is found in the cytoplasm. In terms of biological role, one of several proteins that assist in the late maturation steps of the functional core of the 30S ribosomal subunit. Helps release RbfA from mature subunits. May play a role in the assembly of ribosomal proteins into the subunit. Circularly permuted GTPase that catalyzes slow GTP hydrolysis, GTPase activity is stimulated by the 30S ribosomal subunit. In Pseudomonas aeruginosa (strain ATCC 15692 / DSM 22644 / CIP 104116 / JCM 14847 / LMG 12228 / 1C / PRS 101 / PAO1), this protein is Small ribosomal subunit biogenesis GTPase RsgA.